The following is a 1167-amino-acid chain: PH and Rap-GAP domain-containing protein DDB_G0271806 (1167 aa).

PH domains follow at residues 35-140 (NCVK…SSSL) and 165-257 (HVYL…SRIP). The segment at 95 to 160 (GIDNNNCTNS…TNANTNNGLS (66 aa)) is disordered. A compositionally biased stretch (low complexity) spans 98 to 155 (NNNCTNSNSNNNNNNSDLIHLSAPSLSSSTSSTISPISSSSSLTTTTTTTTTTTNANT). 3 disordered regions span residues 335–361 (SGGG…GGSL), 376–400 (WRFS…STQV), and 645–734 (YSRS…LEPE). Positions 340–351 (NNSSPSSLQSQQ) are enriched in low complexity. Positions 648-676 (SEPNLQSCLSSSPSTRETMVPSSPSSHQL) are enriched in polar residues. Residues 687–732 (EQQLSSSSSSSSQQLQLQLQQQEQEQLLQEQPEAEQSQPEPQPQLE) show a composition bias toward low complexity. The 213-residue stretch at 950 to 1162 (LLSFEERQTT…RTRESLLNYY (213 aa)) folds into the Rap-GAP domain.

The protein is PH and Rap-GAP domain-containing protein DDB_G0271806 of Dictyostelium discoideum (Social amoeba).